A 326-amino-acid polypeptide reads, in one-letter code: DNA repair protein XRCC4 (326 aa).

The tract at residues 1-212 (MERKVSRIYL…QLEESTKPER (212 aa)) is interaction with IFFO1. A Phosphoserine; by PRKDC modification is found at Ser-53. Coiled-coil stretches lie at residues 131 to 165 (LDTI…FEKC) and 185 to 209 (NEKK…ESTK). Positions 180-211 (FILVLNEKKTKIRSLHKLLNEVQQLEESTKPE) are interaction with LIG4. Ser-193 is subject to Phosphoserine; by PRKDC. A disordered region spans residues 203-326 (QLEESTKPER…RNSSPEDLFD (124 aa)). Residues 206–226 (ESTKPERENPCSDKTPEEHGL) are compositionally biased toward basic and acidic residues. At Tyr-227 the chain carries Phosphotyrosine. The residue at position 230 (Ser-230) is a Phosphoserine. Thr-231 carries the post-translational modification Phosphothreonine. Residue Ser-235 is modified to Phosphoserine. Thr-244 carries the post-translational modification Phosphothreonine. A Phosphoserine modification is found at Ser-250. Ser-254 is modified (phosphoserine; by PRKDC). Positions 264–269 (RKRRHR) match the Nuclear localization signal motif. Residue Lys-290 forms a Glycyl lysine isopeptide (Lys-Gly) (interchain with G-Cter in ubiquitin) linkage. Ser-295 bears the Phosphoserine; by PRKDC mark. Position 296 is a phosphoserine (Ser-296). Ser-307 and Ser-312 each carry phosphoserine; by PRKDC. The segment covering 307-326 (SAENMSLETLRNSSPEDLFD) has biased composition (polar residues). The residue at position 315 (Thr-315) is a Phosphothreonine; by PRKDC. Phosphoserine; by PRKDC occurs at positions 319 and 320.

The protein belongs to the XRCC4-XLF family. XRCC4 subfamily. Homodimer and homotetramer in solution. Interacts with NHEJ1/XLF; the interaction is direct and is mediated via a head-to-head interaction between N-terminal head regions. Interacts with LIG4; the LIG4-XRCC4 subcomplex has a 1:2 stoichiometry and XRCC4 is required for LIG4 stability. Component of the core long-range non-homologous end joining (NHEJ) complex (also named DNA-PK complex) composed of PRKDC, LIG4, XRCC4, XRCC6/Ku70, XRCC5/Ku86 and NHEJ1/XLF. Additional component of the NHEJ complex includes PAXX. Following autophosphorylation, PRKDC dissociates from DNA, leading to formation of the short-range NHEJ complex, composed of LIG4, XRCC4, XRCC6/Ku70, XRCC5/Ku86 and NHEJ1/XLF. Interacts with PRKDC; the interaction is direct. Interacts with XRCC6/Ku70; the interaction is direct. Interacts with APTX and APLF. Forms a heterotetramer with IFFO1; the interaction involves LIG4-free XRCC4 and leads to the relocalization of IFFO1 to the sites of DNA damage. Interacts with PNKP; mainly interacts with PNKP when phosphorylated at Thr-231, but is also able to interact at much lower level with PNKP when not unphosphorylated. Interacts with POLL (DNA polymerase lambda). As to quaternary structure, interacts with XKR4; interacts with the processed form of XKR4, which is cleaved by caspase. Phosphorylated by PRKDC at the C-terminus in response to DNA damage; Ser-254 and Ser-312 constitute the main phosphorylation sites. Phosphorylation by PRKDC at the C-terminus of XRCC4 and NHEJ1/XLF are highly redundant and regulate ability of the XRCC4-NHEJ1/XLF subcomplex to bridge DNA. Phosphorylation by PRKDC does not prevent interaction with NHEJ1/XLF but disrupts ability to bridge DNA and promotes detachment from DNA. Phosphorylation at Ser-319 and Ser-320 by PRKDC promotes recognition by the SCF(FBXW7) complex and subsequent ubiquitination via 'Lys-63'-linked ubiquitin. Phosphorylation at Thr-231 by CK2 promotes interaction with PNKP; regulating PNKP activity and localization to DNA damage sites. Phosphorylation by CK2 promotes interaction with APTX. In terms of processing, ubiquitinated at Lys-290 by the SCF(FBXW7) complex via 'Lys-63'-linked ubiquitination, thereby promoting double-strand break repair: the SCF(FBXW7) complex specifically recognizes XRCC4 when phosphorylated at Ser-319 and Ser-320 by PRKDC, and 'Lys-63'-linked ubiquitination facilitates DNA non-homologous end joining (NHEJ) by enhancing association with XRCC5/Ku80 and XRCC6/Ku70. Monoubiquitinated. Post-translationally, undergoes proteolytic processing by caspase-3 (CASP3). This generates the protein XRCC4, C-terminus (XRCC4/C), which translocates to the cytoplasm and activates phospholipid scramblase activity of XKR4, thereby promoting phosphatidylserine exposure on apoptotic cell surface.

The protein localises to the nucleus. The protein resides in the chromosome. It is found in the cytoplasm. Functionally, DNA non-homologous end joining (NHEJ) core factor, required for double-strand break repair and V(D)J recombination. Acts as a scaffold protein that regulates recruitment of other proteins to DNA double-strand breaks (DSBs). Associates with NHEJ1/XLF to form alternating helical filaments that bridge DNA and act like a bandage, holding together the broken DNA until it is repaired. The XRCC4-NHEJ1/XLF subcomplex binds to the DNA fragments of a DSB in a highly diffusive manner and robustly bridges two independent DNA molecules, holding the broken DNA fragments in close proximity to one other. The mobility of the bridges ensures that the ends remain accessible for further processing by other repair factors. Plays a key role in the NHEJ ligation step of the broken DNA during DSB repair via direct interaction with DNA ligase IV (LIG4): the LIG4-XRCC4 subcomplex reseals the DNA breaks after the gap filling is completed. XRCC4 stabilizes LIG4, regulates its subcellular localization and enhances LIG4's joining activity. Binding of the LIG4-XRCC4 subcomplex to DNA ends is dependent on the assembly of the DNA-dependent protein kinase complex DNA-PK to these DNA ends. Promotes displacement of PNKP from processed strand break termini. Its function is as follows. Acts as an activator of the phospholipid scramblase activity of XKR4. This form, which is generated upon caspase-3 (CASP3) cleavage, translocates into the cytoplasm and interacts with XKR4, thereby promoting phosphatidylserine scramblase activity of XKR4 and leading to phosphatidylserine exposure on apoptotic cell surface. The sequence is that of DNA repair protein XRCC4 from Mus musculus (Mouse).